A 328-amino-acid chain; its full sequence is Phenylalanine--tRNA ligase alpha subunit (328 aa).

Residue Glu-253 coordinates Mg(2+).

Belongs to the class-II aminoacyl-tRNA synthetase family. Phe-tRNA synthetase alpha subunit type 1 subfamily. In terms of assembly, tetramer of two alpha and two beta subunits. Mg(2+) serves as cofactor.

The protein localises to the cytoplasm. It catalyses the reaction tRNA(Phe) + L-phenylalanine + ATP = L-phenylalanyl-tRNA(Phe) + AMP + diphosphate + H(+). The protein is Phenylalanine--tRNA ligase alpha subunit of Coxiella burnetii (strain CbuG_Q212) (Coxiella burnetii (strain Q212)).